The primary structure comprises 24 residues: Grammistin Pp 4b (24 aa).

As to quaternary structure, exists as aggregates of 3-4 molecules. As to expression, expressed by the skin glands.

It localises to the secreted. Thanks to its abundant amphiphilic alpha-helices, it may integrate into membrane phospholipids, leading to lysis of the membrane. Its hemolytic activity is inhibited by phospholipids, but not by cholesterol. Has antibacterial activity with a broad spectrum against various species of bacteria including both Gram-positive and Gram-negative groups. Also has ichthyotoxic activity. In Pogonoperca punctata (Clown grouper), this protein is Grammistin Pp 4b.